Here is a 169-residue protein sequence, read N- to C-terminus: Aspartic protease inhibitor 3 (169 aa).

N1 carries an N-linked (GlcNAc...) asparagine glycan. 2 disulfide bridges follow: C30-C75 and C124-C134.

It belongs to the protease inhibitor I3 (leguminous Kunitz-type inhibitor) family.

Its subcellular location is the vacuole. Its function is as follows. Inhibitor of cathepsin D (aspartic protease). May also inhibit trypsin and chymotrypsin (serine proteases). Protects the plant by inhibiting proteases of invading organisms. The polypeptide is Aspartic protease inhibitor 3 (Solanum tuberosum (Potato)).